Reading from the N-terminus, the 562-residue chain is Oxygen-dependent choline dehydrogenase (562 aa).

Residue 4–33 (DYIIIGAGSAGNVLATRLTEDPNTSVLLLE) participates in FAD binding. Catalysis depends on H473, which acts as the Proton acceptor.

This sequence belongs to the GMC oxidoreductase family. Requires FAD as cofactor.

It is found in the cell membrane. The enzyme catalyses choline + A = betaine aldehyde + AH2. The catalysed reaction is betaine aldehyde + NAD(+) + H2O = glycine betaine + NADH + 2 H(+). Its pathway is amine and polyamine biosynthesis; betaine biosynthesis via choline pathway; betaine aldehyde from choline (cytochrome c reductase route): step 1/1. Its function is as follows. Involved in the biosynthesis of the osmoprotectant glycine betaine. Catalyzes the oxidation of choline to betaine aldehyde and betaine aldehyde to glycine betaine at the same rate. The polypeptide is Oxygen-dependent choline dehydrogenase (Escherichia coli O157:H7).